The following is a 556-amino-acid chain: Oxygen-dependent choline dehydrogenase (556 aa).

4–33 contacts FAD; it reads DYIIIGAGSAGNVLATRLTEDPNTTVLLLE. Histidine 473 serves as the catalytic Proton acceptor.

Belongs to the GMC oxidoreductase family. The cofactor is FAD.

The catalysed reaction is choline + A = betaine aldehyde + AH2. It catalyses the reaction betaine aldehyde + NAD(+) + H2O = glycine betaine + NADH + 2 H(+). The protein operates within amine and polyamine biosynthesis; betaine biosynthesis via choline pathway; betaine aldehyde from choline (cytochrome c reductase route): step 1/1. Involved in the biosynthesis of the osmoprotectant glycine betaine. Catalyzes the oxidation of choline to betaine aldehyde and betaine aldehyde to glycine betaine at the same rate. This is Oxygen-dependent choline dehydrogenase from Escherichia coli O127:H6 (strain E2348/69 / EPEC).